Here is a 132-residue protein sequence, read N- to C-terminus: CLAVATA3/ESR (CLE)-related protein TDIF (132 aa).

The first 26 residues, 1 to 26 (MDIDLLWSFGGWFFILFPETINYCMA), serve as a signal peptide directing secretion. Residues 42–62 (SCSSLFFVALLIITILITMLQ) form a helical membrane-spanning segment. Residues 68-77 (EVTSLPTHQP) are compositionally biased toward polar residues. Residues 68–132 (EVTSLPTHQP…PSGPNPISNR (65 aa)) are disordered. The segment covering 87 to 96 (STSSTATTTT) has biased composition (low complexity). Over residues 101–111 (KRTHHQSHPKP) the composition is skewed to basic residues. Pro123 and Pro126 each carry hydroxyproline. An O-linked (Ara...) hydroxyproline glycan is attached at Pro126.

Belongs to the CLV3/ESR signal peptide family. In terms of assembly, interacts specifically with the leucine-rich repeat receptor-like protein kinase TDR. In terms of processing, the TDIFp peptide contains two hydroxprolines, but hydroxylation had no direct effect on TDIFp activity. Post-translationally, the O-glycosylation (arabinosylation) of the hydroxyproline Pro-126 enhances binding affinity of the TDIFp peptide for its receptor.

Its subcellular location is the secreted. The protein resides in the extracellular space. The protein localises to the cell membrane. Functionally, extracellular signal peptide that regulates cell fate. Represses tracheary element differentiation but promotes the formation of procambial cells adjacent to phloem cells in the veins. This is CLAVATA3/ESR (CLE)-related protein TDIF from Zinnia elegans (Garden zinnia).